Consider the following 331-residue polypeptide: Pyrimidine monooxygenase RutA (331 aa).

FMN contacts are provided by residues 79 to 80 (IK), asparagine 145, glutamate 154, 170 to 171 (RY), and serine 220. The interval 300-331 (WLTEQSQKDTRSGTDTNVRQMADPTSASAFNH) is disordered. Positions 312 to 331 (GTDTNVRQMADPTSASAFNH) are enriched in polar residues.

This sequence belongs to the NtaA/SnaA/DszA monooxygenase family. RutA subfamily.

The catalysed reaction is uracil + FMNH2 + NADH + O2 = (Z)-3-ureidoacrylate + FMN + NAD(+) + H2O + H(+). The enzyme catalyses thymine + FMNH2 + NADH + O2 = (Z)-2-methylureidoacrylate + FMN + NAD(+) + H2O + H(+). Catalyzes the pyrimidine ring opening between N-3 and C-4 by an unusual flavin hydroperoxide-catalyzed mechanism, adding oxygen atoms in the process to yield ureidoacrylate peracid, that immediately reacts with FMN forming ureidoacrylate and FMN-N(5)-oxide. The FMN-N(5)-oxide reacts spontaneously with NADH to produce FMN. Requires the flavin reductase RutF to regenerate FMN in vivo. The polypeptide is Pyrimidine monooxygenase RutA (Escherichia coli O7:K1 (strain IAI39 / ExPEC)).